A 521-amino-acid polypeptide reads, in one-letter code: Acidic amino acid decarboxylase GADL1 (521 aa).

K333 is modified (N6-(pyridoxal phosphate)lysine).

It belongs to the group II decarboxylase family. Homodimer. Pyridoxal 5'-phosphate serves as cofactor. As to expression, expressed very weakly in neurons and not detected in astrocytes, brain or liver.

The catalysed reaction is L-aspartate + H(+) = beta-alanine + CO2. The enzyme catalyses 3-sulfino-L-alanine + H(+) = hypotaurine + CO2. It catalyses the reaction L-cysteate + H(+) = taurine + CO2. In terms of biological role, may catalyze the decarboxylation of L-aspartate, 3-sulfino-L-alanine (cysteine sulfinic acid), and L-cysteate to beta-alanine, hypotaurine and taurine, respectively. Does not exhibit any decarboxylation activity toward glutamate. The chain is Acidic amino acid decarboxylase GADL1 (GADL1) from Homo sapiens (Human).